Reading from the N-terminus, the 249-residue chain is tRNA (guanine-N(7)-)-methyltransferase (249 aa).

Residues glutamate 80, glutamate 105, aspartate 132, and aspartate 155 each coordinate S-adenosyl-L-methionine. Aspartate 155 is an active-site residue. Residues lysine 159, aspartate 191, and 228–231 (TKFE) contribute to the substrate site.

Belongs to the class I-like SAM-binding methyltransferase superfamily. TrmB family.

It catalyses the reaction guanosine(46) in tRNA + S-adenosyl-L-methionine = N(7)-methylguanosine(46) in tRNA + S-adenosyl-L-homocysteine. Its pathway is tRNA modification; N(7)-methylguanine-tRNA biosynthesis. Functionally, catalyzes the formation of N(7)-methylguanine at position 46 (m7G46) in tRNA. This Mannheimia succiniciproducens (strain KCTC 0769BP / MBEL55E) protein is tRNA (guanine-N(7)-)-methyltransferase.